A 660-amino-acid polypeptide reads, in one-letter code: Leucine-rich repeat transmembrane protein FLRT2 (660 aa).

Residues 1-35 (MGLQTTKWPSHGAFFLKSWLIISLGLYSQVSKLLA) form the signal peptide. Intrachain disulfides connect C36/C42 and C40/C49. Residues 36–63 (CPSVCRCDRNFVYCNERSLTSVPLGIPE) enclose the LRRNT domain. The Extracellular portion of the chain corresponds to 36–541 (CPSVCRCDRN…TTSHSMGSPF (506 aa)). 10 LRR repeats span residues 64-85 (GVTV…AELH), 89-109 (SVHT…NLPK), 110-131 (NVRV…ALAQ), 134-155 (KLEE…DGAF), 160-181 (SLKL…LPVD), 182-202 (LQEL…AFQN), 205-225 (SLER…AEGT), 231-252 (KLKE…LPGT), 253-274 (HLIR…AFSN), and 277-298 (KLER…VFDN). N202 carries N-linked (GlcNAc...) asparagine glycosylation. The N-linked (GlcNAc...) asparagine glycan is linked to N298. Residues 310–362 (NPWFCDCSIKWVTEWLKYIPSSLNVRGFMCQGPEQVRGMAVRELNMNLLSCPT) enclose the LRRCT domain. 2 disulfide bridges follow: C314–C339 and C316–C360. Residues 373 to 409 (APSTASPTTQPPTLSIPNPSRSYTPPTPTTSKLPTIP) show a composition bias toward low complexity. A disordered region spans residues 373–413 (APSTASPTTQPPTLSIPNPSRSYTPPTPTTSKLPTIPDWDG). Positions 419-517 (PPISERIQLS…ICSEATTHAS (99 aa)) constitute a Fibronectin type-III domain. N-linked (GlcNAc...) asparagine glycans are attached at residues N433 and N521. A helical transmembrane segment spans residues 542 to 562 (LLAGLIGGAVIFVLVVLLSVF). Residues 563–660 (CWHMHKKGRY…SVPDLEHCHT (98 aa)) are Cytoplasmic-facing.

Self-associates (via leucine-rich repeats), giving rise to homooligomers. Interacts with FGFR1. Interacts with FGFR2. Interacts (via extracellular domain) with ADGRL1/LPHN1. Interacts (via extracellular domain) with ADGRL3 (via olfactomedin-like domain). Interacts (via extracellular domain) with UNC5D (via the first Ig-like domain). Can also interact (via extracellular domain) with UNC5B, but with much lower affinity. Interacts (via extracellular domain) with FN1. In terms of processing, N-glycosylated. Proteolytic cleavage in the juxtamembrane region gives rise to a soluble ectodomain. Cleavage is probably effected by a metalloprotease. Expressed in pancreas, skeletal muscle, brain, and heart.

The protein resides in the cell membrane. The protein localises to the endoplasmic reticulum membrane. It localises to the cell junction. Its subcellular location is the focal adhesion. It is found in the secreted. The protein resides in the extracellular space. The protein localises to the extracellular matrix. It localises to the microsome membrane. Its subcellular location is the synapse. It is found in the synaptosome. Its function is as follows. Functions in cell-cell adhesion, cell migration and axon guidance. Mediates cell-cell adhesion via its interactions with ADGRL3 and probably also other latrophilins that are expressed at the surface of adjacent cells. May play a role in the migration of cortical neurons during brain development via its interaction with UNC5D. Mediates axon growth cone collapse and plays a repulsive role in neuron guidance via its interaction with UNC5D, and possibly also other UNC-5 family members. Plays a role in fibroblast growth factor-mediated signaling cascades. Required for normal organization of the cardiac basement membrane during embryogenesis, and for normal embryonic epicardium and heart morphogenesis. This chain is Leucine-rich repeat transmembrane protein FLRT2 (FLRT2), found in Homo sapiens (Human).